The primary structure comprises 348 residues: Eukaryotic translation initiation factor 3 subunit H (348 aa).

One can recognise an MPN domain in the interval 35-169; it reads VQIDGLVVLK…LKAYRLTPKL (135 aa). Positions 267–285 are enriched in low complexity; that stretch reads QQQKHQYQQRRQQENIQRQ. Residues 267–311 form a disordered region; sequence QQQKHQYQQRRQQENIQRQSRGEPPLPEEDINKLFKPPQPPPRME.

This sequence belongs to the eIF-3 subunit H family. In terms of assembly, component of the eukaryotic translation initiation factor 3 (eIF-3) complex, which is composed of 13 subunits: EIF3A, EIF3B, EIF3C, EIF3D, EIF3E, EIF3F, EIF3G, EIF3H, EIF3I, EIF3J, EIF3K, EIF3L and EIF3M.

The protein resides in the cytoplasm. Its function is as follows. Component of the eukaryotic translation initiation factor 3 (eIF-3) complex, which is involved in protein synthesis of a specialized repertoire of mRNAs and, together with other initiation factors, stimulates binding of mRNA and methionyl-tRNAi to the 40S ribosome. The eIF-3 complex specifically targets and initiates translation of a subset of mRNAs involved in cell proliferation. The polypeptide is Eukaryotic translation initiation factor 3 subunit H (Taeniopygia guttata (Zebra finch)).